The primary structure comprises 454 residues: tRNA modification GTPase MnmE (454 aa).

Arg-26, Glu-84, and Lys-123 together coordinate (6S)-5-formyl-5,6,7,8-tetrahydrofolate. The 160-residue stretch at 219 to 378 (GLQVVIAGKP…LVDAITAHAG (160 aa)) folds into the TrmE-type G domain. Residue Asn-229 coordinates K(+). GTP-binding positions include 229 to 234 (NAGKSS), 248 to 254 (TDIAGTT), and 273 to 276 (DTAG). Residue Ser-233 coordinates Mg(2+). Residues Thr-248, Ile-250, and Thr-253 each contribute to the K(+) site. Thr-254 serves as a coordination point for Mg(2+). A (6S)-5-formyl-5,6,7,8-tetrahydrofolate-binding site is contributed by Lys-454.

This sequence belongs to the TRAFAC class TrmE-Era-EngA-EngB-Septin-like GTPase superfamily. TrmE GTPase family. Homodimer. Heterotetramer of two MnmE and two MnmG subunits. Requires K(+) as cofactor.

It localises to the cytoplasm. In terms of biological role, exhibits a very high intrinsic GTPase hydrolysis rate. Involved in the addition of a carboxymethylaminomethyl (cmnm) group at the wobble position (U34) of certain tRNAs, forming tRNA-cmnm(5)s(2)U34. The protein is tRNA modification GTPase MnmE of Acinetobacter baumannii (strain AYE).